The sequence spans 273 residues: Flagellin FljO (273 aa).

This sequence belongs to the bacterial flagellin family. In terms of assembly, in C.crescentus, the flagellar filament is composed of multiple flagellins of 29 kDa; 27 kDa and 25 kDa.

It is found in the secreted. It localises to the bacterial flagellum. In terms of biological role, flagellin is the subunit protein which polymerizes to form the filaments of bacterial flagella. The sequence is that of Flagellin FljO (fljO) from Caulobacter vibrioides (strain ATCC 19089 / CIP 103742 / CB 15) (Caulobacter crescentus).